A 147-amino-acid chain; its full sequence is Hemoglobin subunit delta (147 aa).

The Globin domain occupies 3-147 (HLTPDEKNAV…VATALAHKYH (145 aa)). Phosphoserine is present on Ser51. Heme b contacts are provided by His64 and His93.

The protein belongs to the globin family. As to quaternary structure, heterotetramer of two delta chains and two alpha chains. As to expression, red blood cells.

In Otolemur crassicaudatus (Brown greater galago), this protein is Hemoglobin subunit delta (HBD).